We begin with the raw amino-acid sequence, 129 residues long: Insulin-like growth factor 2 (129 aa).

A signal peptide spans 1–24 (MGVPMGKSLLAPLTFLALASCCFA). The interval 25–52 (AYRPSETLCGGELVDTLQFVCGDRGFYF) is b. 3 disulfides stabilise this stretch: cysteine 33–cysteine 72, cysteine 45–cysteine 85, and cysteine 71–cysteine 76. The segment at 53–65 (SRPASRVSRRSSR) is c. An a region spans residues 66–86 (GIVEECCFRSCDLALLETYCA). The interval 87–92 (TPAKSE) is d. A propeptide spans 93-129 (RDVSTPPTVLPDNFPRYPVGKFFQYDTWKQSAQRLRR) (e peptide).

This sequence belongs to the insulin family. Interacts with MYORG; this interaction is required for IGF2 secretion. Interacts with integrins ITGAV:ITGB3 and ITGA6:ITGB4; integrin-binding is required for IGF2 signaling. In terms of processing, proteolytically processed by PCSK4, proIGF2 is cleaved at Arg-129 and Arg-92 to generate big-IGF2 and mature IGF2.

The protein localises to the secreted. Its function is as follows. The insulin-like growth factors possess growth-promoting activity. Major fetal growth hormone in mammals. Plays a key role in regulating fetoplacental development. IGF2 is influenced by placental lactogen. Also involved in tissue differentiation. In adults, involved in glucose metabolism in adipose tissue, skeletal muscle and liver. Acts as a ligand for integrin which is required for IGF2 signaling. Positively regulates myogenic transcription factor MYOD1 function by facilitating the recruitment of transcriptional coactivators, thereby controlling muscle terminal differentiation. Inhibits myoblast differentiation and modulates metabolism via increasing the mitochondrial respiration rate. In terms of biological role, preptin undergoes glucose-mediated co-secretion with insulin, and acts as a physiological amplifier of glucose-mediated insulin secretion. Exhibits osteogenic properties by increasing osteoblast mitogenic activity through phosphoactivation of MAPK1 and MAPK3. The sequence is that of Insulin-like growth factor 2 from Neovison vison (American mink).